The chain runs to 55 residues: Mitochondrial import receptor subunit TOM7 homolog (55 aa).

At 1 to 20 (MVKLSKEAKQRLQQLFKGSQ) the chain is on the cytoplasmic side. The helical transmembrane segment at 21-36 (FAIRWGFIPLVIYLGF) threads the bilayer. Topologically, residues 37-55 (KRGADPGMPEPTVLSLLWG) are mitochondrial intermembrane.

This sequence belongs to the Tom7 family. As to quaternary structure, forms part of the preprotein translocase complex of the outer mitochondrial membrane (TOM complex) which consists of at least 7 different proteins (TOMM5, TOMM6, TOMM7, TOMM20, TOMM22, TOMM40 and TOMM70).

Its subcellular location is the mitochondrion outer membrane. In terms of biological role, required for assembly and stability of the TOM complex. Positive regulator of PRKN translocation to damaged mitochondria. Acts probably by stabilizing PINK1 on the outer membrane of depolarized mitochondria. The chain is Mitochondrial import receptor subunit TOM7 homolog (TOMM7) from Homo sapiens (Human).